The primary structure comprises 61 residues: MQSMICSSEHENLTCKYWPVSFLASWCENGSGTLMQKDGSLLYAVKNFSHIFEKKIFHTNL.

This is an uncharacterized protein from Saccharomyces cerevisiae (strain ATCC 204508 / S288c) (Baker's yeast).